Here is a 221-residue protein sequence, read N- to C-terminus: Ras-related protein Rab-28 (221 aa).

Position 2 is an N-acetylserine (S2). The residue at position 8 (S8) is a Phosphoserine. GTP contacts are provided by G21, G24, K25, T26, S27, G38, K39, Y41, and T44. T26 is a Mg(2+) binding site. The segment at 35–49 is switch I; it reads ETFGKQYKQTIGLDF. Mg(2+) is bound by residues T44 and D68. The segment at 68-85 is switch II; it reads DIGGQTIGGKMLDKYIYG. Residues G71, N129, K130, D132, A160, and K161 each coordinate GTP. C218 bears the Cysteine methyl ester mark. The S-farnesyl cysteine moiety is linked to residue C218. The propeptide at 219-221 is removed in mature form; it reads AVQ.

This sequence belongs to the small GTPase superfamily. Rab family. As to quaternary structure, interacts (prenylated form) with PDE6D; the interaction promotes RAB28 delivery to the photoreceptor outer segments. Interacts with KCNJ13; the interaction may facilitate cone outer segments phagocytosis. Interacts with RELA; the interaction contributes to RELA transport from cytoplasm to nucleus. Mg(2+) serves as cofactor. In terms of processing, isoprenylated. Testis, brain, and to much lower levels heart, skeletal muscle and fat cells. Expressed in the retina.

The protein localises to the cell membrane. Its subcellular location is the cytoplasm. The protein resides in the cytoskeleton. It is found in the cilium basal body. It localises to the nucleus. It catalyses the reaction GTP + H2O = GDP + phosphate + H(+). With respect to regulation, regulated by guanine nucleotide exchange factors (GEFs) which promote the exchange of bound GDP for free GTP. Regulated by GTPase activating proteins (GAPs) which increase the GTP hydrolysis activity. Inhibited by GDP dissociation inhibitors (GDIs). Functionally, the small GTPases Rab are key regulators of intracellular membrane trafficking, from the formation of transport vesicles to their fusion with membranes. Rabs cycle between an inactive GDP-bound form and an active GTP-bound form that is able to recruit to membranes different sets of downstream effectors directly responsible for vesicle formation, movement, tethering and fusion. RAB28 is required for shedding and phagocytosis of cone cell outer segments (OS) discs in the retina. Also participates in nuclear factor kappa-B p65/RELA nuclear transport in endothelial cells. The protein is Ras-related protein Rab-28 of Rattus norvegicus (Rat).